Reading from the N-terminus, the 120-residue chain is Spermidine export protein MdtJ (120 aa).

The next 4 membrane-spanning stretches (helical) occupy residues 1-21, 31-51, 54-74, and 81-101; these read MFYWILLALAIATEITGTLSM, AGFILMLVMITLSYIFLSFAV, IALGVAYALWEGIGILFITIF, and EALSTMKIAGLLTLVAGIVLI.

Belongs to the drug/metabolite transporter (DMT) superfamily. Small multidrug resistance (SMR) (TC 2.A.7.1) family. MdtJ subfamily. As to quaternary structure, forms a complex with MdtI.

It is found in the cell inner membrane. Catalyzes the excretion of spermidine. The protein is Spermidine export protein MdtJ of Salmonella agona (strain SL483).